The chain runs to 121 residues: Dihydroneopterin aldolase (121 aa).

Residues Glu22, Tyr54, and 73-74 (IE) each bind substrate. Lys100 (proton donor/acceptor) is an active-site residue.

The protein belongs to the DHNA family. As to quaternary structure, homooctamer. Four molecules assemble into a ring, and two rings come together to give a cylinder with a hole of at least 13 a diameter.

It catalyses the reaction 7,8-dihydroneopterin = 6-hydroxymethyl-7,8-dihydropterin + glycolaldehyde. The enzyme catalyses 7,8-dihydroneopterin = 7,8-dihydromonapterin. Its pathway is cofactor biosynthesis; tetrahydrofolate biosynthesis; 2-amino-4-hydroxy-6-hydroxymethyl-7,8-dihydropteridine diphosphate from 7,8-dihydroneopterin triphosphate: step 3/4. Functionally, catalyzes the conversion of 7,8-dihydroneopterin to 6-hydroxymethyl-7,8-dihydropterin. Can also catalyze the epimerization of carbon 2' of dihydroneopterin to dihydromonapterin. This Staphylococcus epidermidis (strain ATCC 35984 / DSM 28319 / BCRC 17069 / CCUG 31568 / BM 3577 / RP62A) protein is Dihydroneopterin aldolase (folB).